The chain runs to 426 residues: Enolase 1 (426 aa).

Position 162 (Q162) interacts with (2R)-2-phosphoglycerate. E204 serves as the catalytic Proton donor. Mg(2+) contacts are provided by D241, E284, and D311. Positions 336, 365, 366, and 387 each coordinate (2R)-2-phosphoglycerate. K336 functions as the Proton acceptor in the catalytic mechanism.

The protein belongs to the enolase family. Requires Mg(2+) as cofactor.

Its subcellular location is the cytoplasm. The protein localises to the secreted. It localises to the cell surface. The enzyme catalyses (2R)-2-phosphoglycerate = phosphoenolpyruvate + H2O. Its pathway is carbohydrate degradation; glycolysis; pyruvate from D-glyceraldehyde 3-phosphate: step 4/5. In terms of biological role, catalyzes the reversible conversion of 2-phosphoglycerate (2-PG) into phosphoenolpyruvate (PEP). It is essential for the degradation of carbohydrates via glycolysis. The polypeptide is Enolase 1 (Methanospirillum hungatei JF-1 (strain ATCC 27890 / DSM 864 / NBRC 100397 / JF-1)).